Consider the following 494-residue polypeptide: Glycerol kinase (494 aa).

Thr-13 provides a ligand contact to ADP. Residues Thr-13, Thr-14, and Ser-15 each coordinate ATP. Position 13 (Thr-13) interacts with sn-glycerol 3-phosphate. Arg-17 is a binding site for ADP. Residues Arg-83, Glu-84, Tyr-135, and Asp-244 each coordinate sn-glycerol 3-phosphate. Residues Arg-83, Glu-84, Tyr-135, Asp-244, and Gln-245 each coordinate glycerol. Residues Thr-266 and Gly-309 each contribute to the ADP site. ATP is bound by residues Thr-266, Gly-309, Gln-313, and Gly-410. The ADP site is built by Gly-410 and Asn-414.

This sequence belongs to the FGGY kinase family.

It catalyses the reaction glycerol + ATP = sn-glycerol 3-phosphate + ADP + H(+). It functions in the pathway polyol metabolism; glycerol degradation via glycerol kinase pathway; sn-glycerol 3-phosphate from glycerol: step 1/1. With respect to regulation, inhibited by fructose 1,6-bisphosphate (FBP). Its function is as follows. Key enzyme in the regulation of glycerol uptake and metabolism. Catalyzes the phosphorylation of glycerol to yield sn-glycerol 3-phosphate. This is Glycerol kinase from Shewanella sp. (strain MR-4).